Reading from the N-terminus, the 24-residue chain is Small ribosomal subunit protein uS19 (24 aa).

A disordered region spans residues Lys1 to Lys24. Over residues Tyr11–Lys24 the composition is skewed to basic residues.

Belongs to the universal ribosomal protein uS19 family.

Its function is as follows. Protein S19 forms a complex with S13 that binds strongly to the 16S ribosomal RNA. The sequence is that of Small ribosomal subunit protein uS19 from Phytoplasma sp. (strain STRAWB2).